The primary structure comprises 208 residues: Coat protein (208 aa).

It belongs to the potexvirus capsid protein family.

The protein resides in the virion. Functionally, required for genome encapsidation. Forms ribonucleoprotein complexes along with TGB1 helicase and viral RNA. The sequence is that of Coat protein from Trifolium (WCMV).